A 290-amino-acid chain; its full sequence is Putative OX-2 membrane glycoprotein homolog (290 aa).

The first 17 residues, 1-17 (MSSLMLRLLPLLYIISA), serve as a signal peptide directing secretion. The Extracellular segment spans residues 18-267 (HFVLHPETSP…SDETVFTWTV (250 aa)). The region spanning 23 to 135 (PETSPSLIYE…TFTVDNEKTS (113 aa)) is the Ig-like V-type domain. Cysteine 41 and cysteine 125 form a disulfide bridge. Asparagine 71, asparagine 104, asparagine 194, and asparagine 202 each carry an N-linked (GlcNAc...) asparagine; by host glycan. The region spanning 146 to 236 (PIVVLYFRYL…TNQKASALVT (91 aa)) is the Ig-like C2-type domain. A helical membrane pass occupies residues 268–288 (PLILILISVIVLLISVCIVAF). Over 289–290 (KS) the chain is Cytoplasmic.

The protein resides in the membrane. This chain is Putative OX-2 membrane glycoprotein homolog (U85), found in Homo sapiens (Human).